We begin with the raw amino-acid sequence, 486 residues long: UDP-N-acetylmuramate--L-alanine ligase (486 aa).

ATP is bound at residue 126-132 (GTHGKTT).

It belongs to the MurCDEF family.

The protein resides in the cytoplasm. It carries out the reaction UDP-N-acetyl-alpha-D-muramate + L-alanine + ATP = UDP-N-acetyl-alpha-D-muramoyl-L-alanine + ADP + phosphate + H(+). It participates in cell wall biogenesis; peptidoglycan biosynthesis. Cell wall formation. This is UDP-N-acetylmuramate--L-alanine ligase from Pectobacterium atrosepticum (strain SCRI 1043 / ATCC BAA-672) (Erwinia carotovora subsp. atroseptica).